Consider the following 436-residue polypeptide: MAIASTLASTQNPFLCLRQPPSPGNRSVVFRRCQDPCGRRWISRSIRACQPSDKVSGQFPFDFMYSSMLIPSSCGEWNRIHLGGDGGISASAQRLYFGKELLSFASDNFLPLALVSGVGLGFANPTLGCLADKYSFTKISTCGIFIISGLTLRTEAIGAAVKGWPLGLFGLISILLLTPSFSRLIMLVQLQPRELVTGLGIFCCMPTTLSSGVALTHLAGGNAALALAVTVASNLLGILTIPFWVSRYIAGGVGVSFPTDQLFRSLIVTLLIPLIIGKVIRESFKGFANFVDNNRKLFSKINAICLSLVPWIQVSRSRSLLLSVQPKVFLAAVGIGILLHLSLLAFNAVSIRILSGLTGGSKSSKENSTAVLLVSSQKTLPVMVAVVEQLGGAFGETGLLVLPCVAAHLNQIMIDSVLVNLWLRRGKDTSTKVKTA.

The transit peptide at 1–47 (MAIASTLASTQNPFLCLRQPPSPGNRSVVFRRCQDPCGRRWISRSIR) directs the protein to the chloroplast. A run of 9 helical transmembrane segments spans residues 109-129 (FLPL…TLGC), 131-151 (ADKY…SGLT), 157-177 (IGAA…ILLL), 195-215 (LVTG…GVAL), 225-245 (LALA…PFWV), 257-277 (FPTD…LIIG), 297-314 (LFSK…WIQV), 328-348 (VFLA…AFNA), and 403-423 (PCVA…NLWL).

This sequence belongs to the bile acid:sodium symporter (BASS) (TC 2.A.28) family.

It localises to the membrane. Its subcellular location is the plastid. The protein resides in the chloroplast envelope. In terms of biological role, may function as sodium-coupled metabolite transporter across the chloroplast envelope. This is Probable sodium/metabolite cotransporter BASS4, chloroplastic (BASS4) from Arabidopsis thaliana (Mouse-ear cress).